A 1039-amino-acid polypeptide reads, in one-letter code: Protein male-specific lethal-1 (1039 aa).

The segment covering 1-13 has biased composition (basic residues); it reads MDKRFKWPPKKRA. 2 disordered regions span residues 1–44 and 171–199; these read MDKR…HLHQ and RRKN…QKLI. Residue serine 18 is modified to Phosphoserine. A Phosphoserine modification is found at serine 238. Disordered stretches follow at residues 244 to 266, 358 to 454, 485 to 691, and 729 to 799; these read HAGA…GEFN, GQSV…GNQN, KKDK…EIDV, and IYPP…SSTT. Basic and acidic residues predominate over residues 255-266; the sequence is KRSESKGRGEFN. Over residues 368–392 the composition is skewed to acidic residues; that stretch reads EEDDDEDDEDDENSDKDDDSEEDDY. Positions 397-407 are enriched in basic and acidic residues; the sequence is SDADVNARTEE. Residues 431–445 show a composition bias toward polar residues; it reads AHSTPNHQQKSSTQA. Serine 433 bears the Phosphoserine mark. Phosphothreonine is present on threonine 434. Residues serine 492 and serine 496 each carry the phosphoserine modification. 2 stretches are compositionally biased toward basic and acidic residues: residues 504 to 515 and 523 to 570; these read PHQEDAIVDHNA and PKPD…DAPK. Composition is skewed to polar residues over residues 581–592 and 609–625; these read TKTSSRESTLPK and NHQS…TQRL. Position 585 is a phosphoserine (serine 585). Threonine 659 carries the phosphothreonine modification. A phosphoserine mark is found at serine 682 and serine 684. At threonine 747 the chain carries Phosphothreonine. Position 749 is a phosphoserine (serine 749). A phosphothreonine mark is found at threonine 750, threonine 751, and threonine 753. Positions 759–768 are enriched in polar residues; the sequence is QHAVTSSMDQ. 2 positions are modified to phosphoserine: serine 764 and serine 765. A Phosphothreonine modification is found at threonine 788. Residue serine 810 is modified to Phosphoserine. Phosphothreonine is present on residues threonine 813 and threonine 832. In terms of domain architecture, PEHE spans 865–983; it reads SLEIPKWRDV…EARDDFGVPW (119 aa). A phosphoserine mark is found at serine 879 and serine 889. An interaction with mof HAT domain region spans residues 886–904; sequence ELLSDATFERRHQKYVKDE. The segment at 1011-1039 is disordered; sequence IPTTAAEARHQENHSSYVFPKRRKRQKNR. Threonine 1014 carries the post-translational modification Phosphothreonine. At serine 1025 the chain carries Phosphoserine. The span at 1030 to 1039 shows a compositional bias: basic residues; it reads PKRRKRQKNR. The Nuclear localization signal motif lies at 1032–1037; the sequence is RRKRQK.

The protein belongs to the msl-1 family. Component of the male-specific lethal (MSL) histone acetyltransferase complex, composed of mof, mle, msl-1, msl-2 and msl-3 proteins, as well as roX1 and roX2 non-coding RNAs. Interacts (via PEHE domain) with mof (via HAT domain) and msl-3 (via MRG domain); both interactions are direct. Interacts with tamo via the nuclear localization signal. Component of a maternal MSL subcomplex composed of mof, msl-1 and msl-3. In terms of processing, phosphorylation at Ser-18, Thr743, Thr-747 and Thr-751 is required to promote phosphorylation of 'Ser-5' of the C-terminal heptapeptide repeat domain (CTD) of the largest RNA polymerase II subunit Polr2A. Phosphorylated by Cdk7 in vitro. In contrast, phosphorylation at Ser-18, Thr743, Thr-747 and Thr-751 does not affect its role in dosage compensation in males. Ubiquitinated by msl-2.

The protein resides in the nucleus. The protein localises to the chromosome. Component of the male-specific lethal (MSL) histone acetyltransferase complex, a multiprotein complex essential for elevating transcription of the single X chromosome in the male (X chromosome dosage compensation). The MSL complex specifically associates with the single X chromosome in males and mediates formation of H4K16ac, promoting a two-fold activation of X chromosome. In complex with msl-2, promotes ubiquitination of histone H2B. In addition to its role in dosage compensation in males, regulates the activity of gene promoters: acts together with Cdk7 to promote phosphorylation of 'Ser-5' of the C-terminal heptapeptide repeat domain (CTD) of the largest RNA polymerase II subunit Polr2A. The sequence is that of Protein male-specific lethal-1 from Drosophila melanogaster (Fruit fly).